Consider the following 478-residue polypeptide: Microfibrillar-associated protein 1 (478 aa).

The segment covering 1 to 20 (MSAATAAAAASGIQSTAGAI) has biased composition (low complexity). Disordered stretches follow at residues 1 to 276 (MSAA…RRAT) and 456 to 478 (NEHAGGMRQQFDKPTGSKRKKME). Residues 53-62 (SSEESDDDDF) show a composition bias toward acidic residues. Positions 107–128 (DDPRLRRLRQRPVDMEDMERER) are enriched in basic and acidic residues. Acidic residues predominate over residues 140-153 (IMESDSEDEEEDEG). The segment covering 160–170 (RGTNKITLASE) has biased composition (polar residues). Acidic residues predominate over residues 171-181 (SDTDAELSDTE). A compositionally biased stretch (basic and acidic residues) spans 197–212 (QREEEVLQKEDEKQSE). Acidic residues predominate over residues 214–231 (SESESSEYEEETESEEDN). Positions 229–478 (EDNEPRLKPL…PTGSKRKKME (250 aa)) are interaction with Prp38. A compositionally biased stretch (basic and acidic residues) spans 245–268 (RATIQEKEREAQKQKQLEAEAKRA).

It belongs to the MFAP1 family. Component of the spliceosome B complex. Interacts (via C-terminus) with Prp38.

The protein localises to the nucleus. Its function is as follows. Required for pre-mRNA splicing. The protein is Microfibrillar-associated protein 1 of Drosophila melanogaster (Fruit fly).